The chain runs to 114 residues: Ribonuclease P protein component (114 aa).

Belongs to the RnpA family. As to quaternary structure, consists of a catalytic RNA component (M1 or rnpB) and a protein subunit.

The enzyme catalyses Endonucleolytic cleavage of RNA, removing 5'-extranucleotides from tRNA precursor.. RNaseP catalyzes the removal of the 5'-leader sequence from pre-tRNA to produce the mature 5'-terminus. It can also cleave other RNA substrates such as 4.5S RNA. The protein component plays an auxiliary but essential role in vivo by binding to the 5'-leader sequence and broadening the substrate specificity of the ribozyme. The polypeptide is Ribonuclease P protein component (Buchnera aphidicola subsp. Schizaphis graminum (strain Sg)).